A 297-amino-acid chain; its full sequence is Protein AKTIP homolog (297 aa).

The segment at 13-75 (FLSDLDEKSS…QRSPSGSSPE (63 aa)) is disordered. The segment covering 17–42 (LDEKSSSSPHDEKKPGDGREVREEKS) has biased composition (basic and acidic residues). The span at 59 to 75 (MNLSIARQRSPSGSSPE) shows a compositional bias: polar residues. One can recognise a UBC core domain in the interval 84–232 (FLEYTLMAEY…VNECLRRCHN (149 aa)).

Belongs to the ubiquitin-conjugating enzyme family. FTS subfamily.

The polypeptide is Protein AKTIP homolog (Nematostella vectensis (Starlet sea anemone)).